Reading from the N-terminus, the 297-residue chain is Bifunctional protein FolD 1 (297 aa).

NADP(+) contacts are provided by residues 174 to 176 (GRS), serine 199, and isoleucine 240.

It belongs to the tetrahydrofolate dehydrogenase/cyclohydrolase family. In terms of assembly, homodimer.

It catalyses the reaction (6R)-5,10-methylene-5,6,7,8-tetrahydrofolate + NADP(+) = (6R)-5,10-methenyltetrahydrofolate + NADPH. The enzyme catalyses (6R)-5,10-methenyltetrahydrofolate + H2O = (6R)-10-formyltetrahydrofolate + H(+). It participates in one-carbon metabolism; tetrahydrofolate interconversion. Its function is as follows. Catalyzes the oxidation of 5,10-methylenetetrahydrofolate to 5,10-methenyltetrahydrofolate and then the hydrolysis of 5,10-methenyltetrahydrofolate to 10-formyltetrahydrofolate. The protein is Bifunctional protein FolD 1 of Acinetobacter baylyi (strain ATCC 33305 / BD413 / ADP1).